Reading from the N-terminus, the 157-residue chain is Large ribosomal subunit protein uL11 (157 aa).

Belongs to the universal ribosomal protein uL11 family. Part of the ribosomal stalk of the 50S ribosomal subunit. Interacts with L10 and the large rRNA to form the base of the stalk. L10 forms an elongated spine to which L12 dimers bind in a sequential fashion forming a multimeric L10(L12)X complex.

Its function is as follows. Forms part of the ribosomal stalk which helps the ribosome interact with GTP-bound translation factors. The polypeptide is Large ribosomal subunit protein uL11 (Archaeoglobus fulgidus (strain ATCC 49558 / DSM 4304 / JCM 9628 / NBRC 100126 / VC-16)).